Here is a 209-residue protein sequence, read N- to C-terminus: MLGQKLNARKREIKNRGYLNQLKRSEQVPAVIYGKGEEAVPIILEKRELNRIFNVHGSRGLFSLEIEGESKPMMTLIREIQRNPVSGQLIHLDFLSVNLNEKINSNVGVLLGGEEEVMKKGGILQAGLKEVEVLCFPQDLPEYLSADISSLEIGETLHVADLIVPAGVEILTEAESVIASILAPSKATTGEEEGAEAAGEGEEAEEKPE.

The disordered stretch occupies residues 185–209 (SKATTGEEEGAEAAGEGEEAEEKPE). Acidic residues predominate over residues 190-209 (GEEEGAEAAGEGEEAEEKPE).

The protein belongs to the bacterial ribosomal protein bL25 family. CTC subfamily. Part of the 50S ribosomal subunit; part of the 5S rRNA/L5/L18/L25 subcomplex. Contacts the 5S rRNA. Binds to the 5S rRNA independently of L5 and L18.

In terms of biological role, this is one of the proteins that binds to the 5S RNA in the ribosome where it forms part of the central protuberance. This chain is Large ribosomal subunit protein bL25, found in Syntrophomonas wolfei subsp. wolfei (strain DSM 2245B / Goettingen).